The primary structure comprises 355 residues: UDP-3-O-acylglucosamine N-acyltransferase (355 aa).

His248 acts as the Proton acceptor in catalysis.

The protein belongs to the transferase hexapeptide repeat family. LpxD subfamily. In terms of assembly, homotrimer.

It carries out the reaction a UDP-3-O-[(3R)-3-hydroxyacyl]-alpha-D-glucosamine + a (3R)-hydroxyacyl-[ACP] = a UDP-2-N,3-O-bis[(3R)-3-hydroxyacyl]-alpha-D-glucosamine + holo-[ACP] + H(+). It functions in the pathway bacterial outer membrane biogenesis; LPS lipid A biosynthesis. Functionally, catalyzes the N-acylation of UDP-3-O-acylglucosamine using 3-hydroxyacyl-ACP as the acyl donor. Is involved in the biosynthesis of lipid A, a phosphorylated glycolipid that anchors the lipopolysaccharide to the outer membrane of the cell. This Syntrophobacter fumaroxidans (strain DSM 10017 / MPOB) protein is UDP-3-O-acylglucosamine N-acyltransferase.